The chain runs to 68 residues: uncharacterized protein (68 aa).

This is an uncharacterized protein from Feline immunodeficiency virus (strain San Diego) (FIV).